The following is a 352-amino-acid chain: Carbohydrate sulfotransferase 11 (352 aa).

At 1-16 the chain is on the cytoplasmic side; that stretch reads MKPALLEVMRMNRICR. The chain crosses the membrane as a helical; Signal-anchor for type II membrane protein span at residues 17 to 37; sequence MVLATCLGSFILVIFYFQSML. The Lumenal portion of the chain corresponds to 38–352; it reads HPVMRRNPFG…YSVPNYLKLD (315 aa). 3'-phosphoadenylyl sulfate contacts are provided by residues 124 to 130 and 186 to 194; these read PKVACTN and REPFERLVS. Residues N205, N223, N321, and N342 are each glycosylated (N-linked (GlcNAc...) asparagine).

This sequence belongs to the sulfotransferase 2 family. In terms of processing, N-glycosylated; required for activity and stability.

The protein localises to the golgi apparatus membrane. The enzyme catalyses chondroitin beta-D-glucuronate + n 3'-phosphoadenylyl sulfate = chondroitin 4'-sulfate + n adenosine 3',5'-bisphosphate + n H(+). Its function is as follows. Catalyzes the transfer of sulfate to position 4 of the N-acetylgalactosamine (GalNAc) residue of chondroitin. Chondroitin sulfate constitutes the predominant proteoglycan present in cartilage and is distributed on the surfaces of many cells and extracellular matrices. Can also sulfate Gal residues in desulfated dermatan sulfate. Preferentially sulfates in GlcA-&gt;GalNAc unit than in IdoA-&gt;GalNAc unit. Does not form 4, 6-di-O-sulfated GalNAc when chondroitin sulfate C is used as an acceptor. This Rattus norvegicus (Rat) protein is Carbohydrate sulfotransferase 11 (Chst11).